Here is a 281-residue protein sequence, read N- to C-terminus: NADPH-dependent 7-cyano-7-deazaguanine reductase (281 aa).

A substrate-binding site is contributed by 87-89 (VES). 89–90 (SK) provides a ligand contact to NADPH. The active-site Thioimide intermediate is the cysteine 188. Catalysis depends on aspartate 195, which acts as the Proton donor. Substrate is bound at residue 227–228 (HE). 256-257 (RG) serves as a coordination point for NADPH.

The protein belongs to the GTP cyclohydrolase I family. QueF type 2 subfamily. Homodimer.

It is found in the cytoplasm. The enzyme catalyses 7-aminomethyl-7-carbaguanine + 2 NADP(+) = 7-cyano-7-deazaguanine + 2 NADPH + 3 H(+). It participates in tRNA modification; tRNA-queuosine biosynthesis. Catalyzes the NADPH-dependent reduction of 7-cyano-7-deazaguanine (preQ0) to 7-aminomethyl-7-deazaguanine (preQ1). This Aliivibrio salmonicida (strain LFI1238) (Vibrio salmonicida (strain LFI1238)) protein is NADPH-dependent 7-cyano-7-deazaguanine reductase.